The chain runs to 181 residues: Large ribosomal subunit protein uL5 (181 aa).

This sequence belongs to the universal ribosomal protein uL5 family. As to quaternary structure, part of the 50S ribosomal subunit; part of the 5S rRNA/L5/L18/L25 subcomplex. Contacts the 5S rRNA and the P site tRNA. Forms a bridge to the 30S subunit in the 70S ribosome.

Its function is as follows. This is one of the proteins that bind and probably mediate the attachment of the 5S RNA into the large ribosomal subunit, where it forms part of the central protuberance. In the 70S ribosome it contacts protein S13 of the 30S subunit (bridge B1b), connecting the 2 subunits; this bridge is implicated in subunit movement. Contacts the P site tRNA; the 5S rRNA and some of its associated proteins might help stabilize positioning of ribosome-bound tRNAs. The protein is Large ribosomal subunit protein uL5 of Campylobacter lari (strain RM2100 / D67 / ATCC BAA-1060).